The primary structure comprises 626 residues: Two-component response regulator ORR24 (626 aa).

Residues 1-22 are disordered; it reads MTVEERQGRVGGHGVSGGGGGR. The segment covering 9 to 22 has biased composition (gly residues); sequence RVGGHGVSGGGGGR. The Response regulatory domain maps to 30–145; the sequence is RVLAVDDDPT…QLRTIWQHVI (116 aa). Asp81 is modified (4-aspartylphosphate). Residues 151-162 are compositionally biased toward basic and acidic residues; that stretch reads DAKNRGNDDDAG. Disordered stretches follow at residues 151–215 and 400–440; these read DAKN…KKPR and LQPL…RTTN. Positions 191–202 are enriched in acidic residues; it reads NGDDGDDSDENS. The myb-like GARP DNA-binding region spans 210-269; it reads TQKKPRVVWSVELHRKFVAAVNQLGIEKAVPKKILDLMNVENITRENVASHLQKYRLYLK. Residues 400–421 show a composition bias toward polar residues; the sequence is LQPLESSSQQHLSRVHSSSADP.

It belongs to the ARR family. Type-B subfamily. Post-translationally, two-component system major event consists of a His-to-Asp phosphorelay between a sensor histidine kinase (HK) and a response regulator (RR). In plants, the His-to-Asp phosphorelay involves an additional intermediate named Histidine-containing phosphotransfer protein (HPt). This multistep phosphorelay consists of a His-Asp-His-Asp sequential transfer of a phosphate group between first a His and an Asp of the HK protein, followed by the transfer to a conserved His of the HPt protein and finally the transfer to an Asp in the receiver domain of the RR protein.

It is found in the nucleus. Transcriptional activator that binds specific DNA sequence. Functions as a response regulator involved in His-to-Asp phosphorelay signal transduction system. Phosphorylation of the Asp residue in the receiver domain activates the ability of the protein to promote the transcription of target genes. May directly activate some type-A response regulators in response to cytokinins. This is Two-component response regulator ORR24 from Oryza sativa subsp. indica (Rice).